A 209-amino-acid chain; its full sequence is CASP-like protein 1B1 (209 aa).

Positions 1-10 are enriched in basic and acidic residues; it reads MDLERGDKKP. Residues 1–39 are disordered; sequence MDLERGDKKPPPPPPPAPRTAAATTTTTTTPACSGKKRP. The Cytoplasmic portion of the chain corresponds to 1–49; the sequence is MDLERGDKKPPPPPPPAPRTAAATTTTTTTPACSGKKRPPLRDSLVALQ. Residues 19–32 are compositionally biased toward low complexity; it reads RTAAATTTTTTTPA. Residues 50-70 traverse the membrane as a helical segment; the sequence is PVLLRAAAALAAAAAAAVMAL. At 71 to 100 the chain is on the extracellular side; the sequence is DAQSYTAVVAIVGTRPLTQTFTAKFSDTPA. The helical transmembrane segment at 101–121 threads the bilayer; sequence FVYFVIANAIAAAYNLLVLLV. Residues 122 to 134 lie on the Cytoplasmic side of the membrane; it reads RRRRRTTAGLVVR. The helical transmembrane segment at 135–155 threads the bilayer; sequence MLDMVVMALLATGAAAAASMA. At 156–180 the chain is on the extracellular side; the sequence is ELGRNGNARARWNPVCDRFGSFCRR. A helical transmembrane segment spans residues 181–201; it reads GGAALAASFVGVALMLALNLL. Topologically, residues 202–209 are cytoplasmic; that stretch reads SAASGAGC.

This sequence belongs to the Casparian strip membrane proteins (CASP) family. As to quaternary structure, homodimer and heterodimers.

It localises to the cell membrane. The protein is CASP-like protein 1B1 of Zea mays (Maize).